Consider the following 414-residue polypeptide: Triose phosphate/phosphate translocator, chloroplastic (414 aa).

The N-terminal 78 residues, 1-78 (MESRVLTGGA…ILLETSPKRE (78 aa)), are a transit peptide targeting the chloroplast. The Chloroplast intermembrane portion of the chain corresponds to 79 to 108 (SIKPCSAAASSSAGSSDSSGDAKVGFFNKA). The chain crosses the membrane as a helical span at residues 109–129 (TLTTGFFFFMWYFLNVIFNIL). The Lumenal portion of the chain corresponds to 130 to 141 (NKKIYNYFPYPY). A helical transmembrane segment spans residues 142-162 (FVSVIHLAVGVVYCLVSWGVG). Topologically, residues 163–219 (LPKRAPIDSTQLKLLTPVAFCHALGHVTSNVSFAAVRVSFTHTVKALEPFFNAAASQ) are chloroplast intermembrane. A helical transmembrane segment spans residues 220–240 (FILGQQIPLALWLSLAPVVLG). Over 241–284 (VSMASLTELSFNWLGFTSAMISNISFTYRSIYSKKAMTDMDSTN) the chain is Lumenal. Residues 285–304 (VYAYISIIALIFCLPPAIFI) form a helical membrane-spanning segment. Residues 305-382 (EGPQLLQHGF…VIFGNKISTQ (78 aa)) lie on the Chloroplast intermembrane side of the membrane. A helical membrane pass occupies residues 383–403 (TGIGTCIAIAGVAIYSFIKAK). Residues 404-414 (MEEEKRQKKAA) are Lumenal-facing.

It belongs to the TPT transporter family. TPT (TC 2.A.7.9) subfamily.

The protein localises to the plastid. It is found in the chloroplast membrane. Its function is as follows. Mediates the export of fixed carbons from the chloroplasts into the cytosol in the form of triose phosphates. The sequence is that of Triose phosphate/phosphate translocator, chloroplastic (TPT) from Solanum tuberosum (Potato).